A 187-amino-acid chain; its full sequence is UPF0398 protein LJ_1195 (187 aa).

Belongs to the UPF0398 family.

In Lactobacillus johnsonii (strain CNCM I-12250 / La1 / NCC 533), this protein is UPF0398 protein LJ_1195.